The sequence spans 369 residues: F-box protein At3g08750 (369 aa).

The region spanning 6-53 (CLLLPSLPFELIEEILYKIPAESLIRFKSTCKKWYNLITEKRFMYNHL) is the F-box domain.

This chain is F-box protein At3g08750, found in Arabidopsis thaliana (Mouse-ear cress).